A 106-amino-acid polypeptide reads, in one-letter code: MKGGLGNLMKQAQQLQSNMEKAQEELANMEVTGQAGGGMVSIVMTGRYDCRRISIHSELWQEDKEMVEDLVAAAINDAVRQVETQSKEKMSSMTSGMLPPGFKLPL.

2 disordered regions span residues 1 to 20 (MKGGLGNLMKQAQQLQSNME) and 85 to 106 (QSKEKMSSMTSGMLPPGFKLPL). A compositionally biased stretch (polar residues) spans 10–20 (KQAQQLQSNME).

It belongs to the YbaB/EbfC family. Homodimer.

The protein resides in the cytoplasm. Its subcellular location is the nucleoid. Its function is as follows. Binds to DNA and alters its conformation. May be involved in regulation of gene expression, nucleoid organization and DNA protection. In Nitrosococcus oceani (strain ATCC 19707 / BCRC 17464 / JCM 30415 / NCIMB 11848 / C-107), this protein is Nucleoid-associated protein Noc_2594.